Consider the following 510-residue polypeptide: tRNA(Ile)-lysidine synthase (510 aa).

32–37 (SGGLDS) is an ATP binding site.

Belongs to the tRNA(Ile)-lysidine synthase family.

Its subcellular location is the cytoplasm. It carries out the reaction cytidine(34) in tRNA(Ile2) + L-lysine + ATP = lysidine(34) in tRNA(Ile2) + AMP + diphosphate + H(+). Its function is as follows. Ligates lysine onto the cytidine present at position 34 of the AUA codon-specific tRNA(Ile) that contains the anticodon CAU, in an ATP-dependent manner. Cytidine is converted to lysidine, thus changing the amino acid specificity of the tRNA from methionine to isoleucine. This Blochmanniella pennsylvanica (strain BPEN) protein is tRNA(Ile)-lysidine synthase.